The primary structure comprises 785 residues: Cadherin-7 (785 aa).

The N-terminal stretch at 1–27 (MKLGKVELCHFLQLIALFLCFSGMSQA) is a signal peptide. The propeptide occupies 28–47 (ELPRSRSKPYFQSGRSRTKR). Topologically, residues 28 to 607 (ELPRSRSKPY…AYVLPAGLST (580 aa)) are extracellular. 5 Cadherin domains span residues 49–153 (WVWN…EPKF), 154–262 (LDGP…PPRF), 263–377 (PRRS…PPVF), 378–482 (SSPL…APEF), and 482–599 (FAMD…AEAY). 2 N-linked (GlcNAc...) asparagine glycosylation sites follow: N449 and N530. A helical transmembrane segment spans residues 608–628 (GALIAILACVLTLLVLILLIV). The Cytoplasmic portion of the chain corresponds to 629 to 785 (TMRRRKKEPL…YGNGQESLYS (157 aa)).

The protein localises to the cell membrane. Functionally, cadherins are calcium-dependent cell adhesion proteins. They preferentially interact with themselves in a homophilic manner in connecting cells; cadherins may thus contribute to the sorting of heterogeneous cell types. The chain is Cadherin-7 (Cdh7) from Mus musculus (Mouse).